A 193-amino-acid polypeptide reads, in one-letter code: Large ribosomal subunit protein bL21 (193 aa).

Belongs to the bacterial ribosomal protein bL21 family. As to quaternary structure, part of the 50S ribosomal subunit. Contacts protein L20.

Its function is as follows. This protein binds to 23S rRNA in the presence of protein L20. This is Large ribosomal subunit protein bL21 from Ruegeria pomeroyi (strain ATCC 700808 / DSM 15171 / DSS-3) (Silicibacter pomeroyi).